A 140-amino-acid chain; its full sequence is MRRVVAQGTFDLLHPGHLYYLTEAKSMGDELHVIVARSQNVTHKQPPIVPDEQRREMVAGLDPVDSARLGHTDDFFVPIRDIDPDVIVLGHDQHHDDERLAEMLTEEGIDCEVARASARDGDDKILSTGRIVDRICEERC.

ATP contacts are provided by residues 9-10, 14-17, and Asp-92; these read TF and HPGH.

The protein belongs to the archaeal FAD synthase family. Homodimer. A divalent metal cation is required as a cofactor.

It catalyses the reaction FMN + ATP + H(+) = FAD + diphosphate. The protein operates within cofactor biosynthesis; FAD biosynthesis; FAD from FMN: step 1/1. In terms of biological role, catalyzes the transfer of the AMP portion of ATP to flavin mononucleotide (FMN) to produce flavin adenine dinucleotide (FAD) coenzyme. This is FAD synthase from Natronomonas pharaonis (strain ATCC 35678 / DSM 2160 / CIP 103997 / JCM 8858 / NBRC 14720 / NCIMB 2260 / Gabara) (Halobacterium pharaonis).